The primary structure comprises 543 residues: Neurofilament light polypeptide (543 aa).

S2 carries the N-acetylserine modification. The segment at 2–92 (SSFSYEPYYS…LKSIRTQEKA (91 aa)) is head. O-linked (GlcNAc) threonine glycosylation occurs at T21. An Asymmetric dimethylarginine; alternate modification is found at R23. Omega-N-methylarginine; alternate is present on R23. Residue S27 is glycosylated (O-linked (GlcNAc) serine). R30 carries the post-translational modification Omega-N-methylarginine. Residue Y43 is modified to Phosphotyrosine. Residues S56, S67, and S103 each carry the phosphoserine modification. Positions 90–400 (EKAQLQDLND…KLLEGEETRL (311 aa)) constitute an IF rod domain. The coil 1A stretch occupies residues 93-124 (QLQDLNDRFASFIERVHELEQQNKVLEAELLV). The segment at 125-137 (LRQKHSEPSRFRA) is linker 1. The interval 138 to 234 (LYEQEIRDLR…KVHEEEIAEL (97 aa)) is coil 1B. The linker 12 stretch occupies residues 235-252 (QAQIQYAQISVEMDVTKP). The interval 253-271 (DLSAALKDIRAQYEKLAAK) is coil 2A. A linker 2 region spans residues 272–280 (NMQNAEEWF). A coil 2B region spans residues 281-396 (KSRFTVLTES…AAYRKLLEGE (116 aa)). The tract at residues 381–391 (ALDIEIAAYRK) is epitope; recognized by IF-specific monoclonal antibody. The segment at 397 to 443 (ETRLSFTSVGSITSGYSQSSQVFGRSAYGGLQTSSYLMSTRSFPSYY) is tail, subdomain A. A tail region spans residues 397–543 (ETRLSFTSVG…GEEQAAKKKD (147 aa)). The tail, subdomain B (acidic) stretch occupies residues 444–543 (TSHVQEEQIE…GEEQAAKKKD (100 aa)). The segment at 462–543 (KAEEAKDEPP…GEEQAAKKKD (82 aa)) is disordered. Acidic residues predominate over residues 471-525 (PSEGEAEEEEKDKEEAEEEEAAEEEEAAKEESEEAKEEEEGGEGEEGEETKEAEE). A phosphoserine mark is found at S472 and S502. Position 520 is a phosphothreonine (T520). The span at 526–543 (EEKKVEGAGEEQAAKKKD) shows a compositional bias: basic and acidic residues.

This sequence belongs to the intermediate filament family. In terms of assembly, forms homodimers (in vitro). Forms heterodimers with NEFH or NEFM; which can further hetero-oligomerize (in vitro). Forms heterodimers with INA (in vitro). Interacts with ARHGEF28. Interacts with TRIM2. In terms of processing, O-glycosylated. Phosphorylated in the head and rod regions by the PKC kinase PKN1, leading to the inhibition of polymerization. Post-translationally, ubiquitinated in the presence of TRIM2 and UBE2D1.

The protein localises to the cell projection. The protein resides in the axon. Its subcellular location is the cytoplasm. It is found in the cytoskeleton. Neurofilaments usually contain three intermediate filament proteins: NEFL, NEFM, and NEFH which are involved in the maintenance of neuronal caliber. May additionally cooperate with the neuronal intermediate filament proteins PRPH and INA to form neuronal filamentous networks. The protein is Neurofilament light polypeptide (NEFL) of Homo sapiens (Human).